A 180-amino-acid polypeptide reads, in one-letter code: Inner membrane-spanning protein YciB (180 aa).

Helical transmembrane passes span 22–42 (IYVA…LTWL), 50–70 (MTLI…VFHN), 76–96 (WKVT…QVVL), 121–141 (AAWA…AFWL), and 149–169 (FKVF…GIYI).

It belongs to the YciB family.

Its subcellular location is the cell inner membrane. Plays a role in cell envelope biogenesis, maintenance of cell envelope integrity and membrane homeostasis. This is Inner membrane-spanning protein YciB from Edwardsiella ictaluri (strain 93-146).